Reading from the N-terminus, the 429-residue chain is MANVVVVGTQWGDEGKGKIVDWLSEQADVVVRYQGGHNAGHTLVINGISYKLSLLPSGVVRGKLSVIGNGVVVDPHHFVSELKKLRDQGVEITPKVLRVAENASLILSVHRDLDAARENGISGLTIGTTKRGIGPAYEDKVGRRSIRMIDLAETNTLMAKIERLLRHHNALRRGMGIAEIDPKTLYDELMQVADEILPFMDCTWRLLDERHRMGQRILFEGAQGASLDNDFGTYPYVTSSNTVSGQAFIGSGMGPGSVHYVLGIAKAYTTRVGEGPFPTEQVNDVGEFLGMRGNEFGVVTGRKRRCGWFDAVLVRQMVKICSVRGIALTKLDVLDGLDEIKICIGYEIDGRKIDYLPSCIEEQARVKPIYETLEGWKEATACTLNWEELPVQAIKYVRRIEELIGVPIALLSTSPEREDTIFIIDPFAD.

GTP contacts are provided by residues Gly-12–Lys-18 and Gly-40–Thr-42. The active-site Proton acceptor is Asp-13. Mg(2+) is bound by residues Asp-13 and Gly-40. Residues Asp-13–Lys-16, Asn-38–His-41, Thr-129, Arg-143, Gln-223, Thr-238, and Arg-302 contribute to the IMP site. Residue His-41 is the Proton donor of the active site. Val-298–Arg-304 contacts substrate. GTP contacts are provided by residues Arg-304, Lys-330–Asp-332, and Ser-412–Ser-414.

The protein belongs to the adenylosuccinate synthetase family. In terms of assembly, homodimer. Mg(2+) is required as a cofactor.

The protein localises to the cytoplasm. The catalysed reaction is IMP + L-aspartate + GTP = N(6)-(1,2-dicarboxyethyl)-AMP + GDP + phosphate + 2 H(+). Its pathway is purine metabolism; AMP biosynthesis via de novo pathway; AMP from IMP: step 1/2. Plays an important role in the de novo pathway of purine nucleotide biosynthesis. Catalyzes the first committed step in the biosynthesis of AMP from IMP. The polypeptide is Adenylosuccinate synthetase (Bartonella bacilliformis (strain ATCC 35685 / KC583 / Herrer 020/F12,63)).